Consider the following 207-residue polypeptide: MKTTINIATPTLKKPSKEANLVASIYGLLFVCGAKGITLRELIRIFKKAGIEKVKLALLALERKLADDEQSGVELKKFGNSFSLVTKPIIKDYLHLLLAHKVKNPLNSKAMEVLAIIAYNQPCTRPRINEIRGVDSFQIVDDLIAKELIVELGRTDKPGRPFIYEVSAKFYDLFGIDSLDQLPKIEHFDLDKFKQGSFFDSNRYGDE.

This sequence belongs to the ScpB family. Homodimer. Homodimerization may be required to stabilize the binding of ScpA to the Smc head domains. Component of a cohesin-like complex composed of ScpA, ScpB and the Smc homodimer, in which ScpA and ScpB bind to the head domain of Smc. The presence of the three proteins is required for the association of the complex with DNA.

The protein resides in the cytoplasm. Functionally, participates in chromosomal partition during cell division. May act via the formation of a condensin-like complex containing Smc and ScpA that pull DNA away from mid-cell into both cell halves. The chain is Segregation and condensation protein B from Mycoplasma genitalium (strain ATCC 33530 / DSM 19775 / NCTC 10195 / G37) (Mycoplasmoides genitalium).